An 885-amino-acid polypeptide reads, in one-letter code: Alanine--tRNA ligase (885 aa).

Residues 426–444 (QEQKTRARQDRREKQRGGA) show a composition bias toward basic and acidic residues. Residues 426 to 445 (QEQKTRARQDRREKQRGGAE) are disordered. Zn(2+) is bound by residues H568, H572, C671, and H675.

Belongs to the class-II aminoacyl-tRNA synthetase family. Zn(2+) is required as a cofactor.

The protein resides in the cytoplasm. It carries out the reaction tRNA(Ala) + L-alanine + ATP = L-alanyl-tRNA(Ala) + AMP + diphosphate. Its function is as follows. Catalyzes the attachment of alanine to tRNA(Ala) in a two-step reaction: alanine is first activated by ATP to form Ala-AMP and then transferred to the acceptor end of tRNA(Ala). Also edits incorrectly charged Ser-tRNA(Ala) and Gly-tRNA(Ala) via its editing domain. This is Alanine--tRNA ligase from Chlorobium phaeovibrioides (strain DSM 265 / 1930) (Prosthecochloris vibrioformis (strain DSM 265)).